We begin with the raw amino-acid sequence, 369 residues long: uncharacterized protein (369 aa).

9 helical membrane-spanning segments follow: residues 25–45, 47–67, 119–139, 152–172, 206–226, 235–255, 268–288, 295–315, and 323–343; these read QWVI…TVHW, FGLL…LMPE, LNIV…FGVM, ITGF…FSAL, GALH…LFAI, LQAV…TLHL, LLFT…LPLI, LVGF…TTVF, and WVFY…GTVF.

It to B.subtilis ComEC.

The protein localises to the cell membrane. This is an uncharacterized protein from Mycoplasma pneumoniae (strain ATCC 29342 / M129 / Subtype 1) (Mycoplasmoides pneumoniae).